Here is a 316-residue protein sequence, read N- to C-terminus: Aspartate carbamoyltransferase catalytic subunit (316 aa).

2 residues coordinate carbamoyl phosphate: Arg-59 and Thr-60. Lys-88 contributes to the L-aspartate binding site. Carbamoyl phosphate contacts are provided by Arg-109, His-137, and Gln-140. Positions 170 and 232 each coordinate L-aspartate. Carbamoyl phosphate contacts are provided by Leu-269 and Pro-270.

Belongs to the aspartate/ornithine carbamoyltransferase superfamily. ATCase family. As to quaternary structure, heterooligomer of catalytic and regulatory chains.

It carries out the reaction carbamoyl phosphate + L-aspartate = N-carbamoyl-L-aspartate + phosphate + H(+). Its pathway is pyrimidine metabolism; UMP biosynthesis via de novo pathway; (S)-dihydroorotate from bicarbonate: step 2/3. In terms of biological role, catalyzes the condensation of carbamoyl phosphate and aspartate to form carbamoyl aspartate and inorganic phosphate, the committed step in the de novo pyrimidine nucleotide biosynthesis pathway. This chain is Aspartate carbamoyltransferase catalytic subunit, found in Methanobrevibacter smithii (strain ATCC 35061 / DSM 861 / OCM 144 / PS).